The sequence spans 176 residues: Large ribosomal subunit protein uL6 (176 aa).

Basic and acidic residues predominate over residues 156-170; that stretch reads YKGKGVRYADEQVRR. The disordered stretch occupies residues 156–176; sequence YKGKGVRYADEQVRRKEAKKK.

Belongs to the universal ribosomal protein uL6 family. As to quaternary structure, part of the 50S ribosomal subunit.

Functionally, this protein binds to the 23S rRNA, and is important in its secondary structure. It is located near the subunit interface in the base of the L7/L12 stalk, and near the tRNA binding site of the peptidyltransferase center. The polypeptide is Large ribosomal subunit protein uL6 (Shewanella woodyi (strain ATCC 51908 / MS32)).